Reading from the N-terminus, the 640-residue chain is Threonine--tRNA ligase (640 aa).

The region spanning 1 to 61 (MPIITLPDGS…DRDATLQIIT (61 aa)) is the TGS domain. The tract at residues 242–533 (DHRRIGKQLD…LIEHYAGAFP (292 aa)) is catalytic. The Zn(2+) site is built by Cys-333, His-384, and His-510.

The protein belongs to the class-II aminoacyl-tRNA synthetase family. Homodimer. Zn(2+) serves as cofactor.

It localises to the cytoplasm. It carries out the reaction tRNA(Thr) + L-threonine + ATP = L-threonyl-tRNA(Thr) + AMP + diphosphate + H(+). Its function is as follows. Catalyzes the attachment of threonine to tRNA(Thr) in a two-step reaction: L-threonine is first activated by ATP to form Thr-AMP and then transferred to the acceptor end of tRNA(Thr). Also edits incorrectly charged L-seryl-tRNA(Thr). The sequence is that of Threonine--tRNA ligase from Pseudomonas aeruginosa (strain LESB58).